The sequence spans 449 residues: MATKVEEINKLKKKNLHFRQCSADSLSNSSMQFDLSGLNTPVGELATSNLPSPAHPPFGELHQESRTSNSSAMHIENVVASRLMYNEVANGSFALEPKNILVVTKPRKHSLVYKTAEITKYILTIGTPETKVYVDMRLARSKRFSAHNIAKEANTDIDRIKYWNPYICLIKPSIFDLAITIGDNSTLLYTSWLFQKIGPPVLSFSDDDVPGFLTHFSLSNYQQHLYQVLTQNVSLRFCSRLQCSFHKYDEKTKQYSLASTTYSLDEILISRGEHPFISNLNVYNNSELMTVVQADGLVVATPTGSTNISANAGGSLVHPALNAILVTPVCPHTLSFRPIILPDYNVLNVEIPLDSRSSAFFSVDRHESVEMHRGDYLSIVTSHYPFTTIQNPGYQWTKVLEDKFNWNVRERQKPFSRKPSLSDVKDTSDDKFDITDNSYCREFSADIDG.

A Phosphoserine modification is found at S420.

Belongs to the NAD kinase family.

It localises to the cytoplasm. It is found in the nucleus. This is an uncharacterized protein from Schizosaccharomyces pombe (strain 972 / ATCC 24843) (Fission yeast).